Here is an 875-residue protein sequence, read N- to C-terminus: Serine/threonine-protein phosphatase 4 regulatory subunit 4 (875 aa).

HEAT repeat units lie at residues 215-253 (ILPL…TKNV) and 254-292 (VLPE…RSQT). Residues 686-730 (MFQKKNYEKDLLDQEKEREELLFLEMEQLEKEKHQSDGRLASDKS) adopt a coiled-coil conformation. A compositionally biased stretch (basic and acidic residues) spans 718–739 (KHQSDGRLASDKSFEKKRRDSR). The tract at residues 718–773 (KHQSDGRLASDKSFEKKRRDSRTSTQSLSKNLPISVPGPSSSTASTSKEIKKSKLT) is disordered. The span at 740 to 764 (TSTQSLSKNLPISVPGPSSSTASTS) shows a compositional bias: polar residues. Serine 777 is modified (phosphoserine). Threonine 799 carries the post-translational modification Phosphothreonine. The segment covering 825–859 (RNASSVPASFSPNPVMPSTSRGPGNTADPKSSGSK) has biased composition (polar residues). The disordered stretch occupies residues 825-875 (RNASSVPASFSPNPVMPSTSRGPGNTADPKSSGSKDAQPRKATLKSRKSNP). The span at 866-875 (ATLKSRKSNP) shows a compositional bias: basic residues.

Serine/threonine-protein phosphatase 4 (PP4) occurs in different assemblies of the catalytic and one or more regulatory subunits. Component of the PP4 complex PPP4C-PPP4R4.

The protein resides in the cytoplasm. In terms of biological role, putative regulatory subunit of serine/threonine-protein phosphatase 4. The sequence is that of Serine/threonine-protein phosphatase 4 regulatory subunit 4 (Ppp4r4) from Mus musculus (Mouse).